A 1030-amino-acid chain; its full sequence is Isoleucine--tRNA ligase 2 (1030 aa).

The 'HIGH' region signature appears at Pro-48–His-58. Residues Lys-589–Arg-593 carry the 'KMSKS' region motif. Lys-592 contacts ATP.

The protein belongs to the class-I aminoacyl-tRNA synthetase family. IleS type 2 subfamily. In terms of assembly, monomer. The cofactor is Zn(2+).

The protein resides in the cytoplasm. It catalyses the reaction tRNA(Ile) + L-isoleucine + ATP = L-isoleucyl-tRNA(Ile) + AMP + diphosphate. In terms of biological role, catalyzes the attachment of isoleucine to tRNA(Ile). As IleRS can inadvertently accommodate and process structurally similar amino acids such as valine, to avoid such errors it has two additional distinct tRNA(Ile)-dependent editing activities. One activity is designated as 'pretransfer' editing and involves the hydrolysis of activated Val-AMP. The other activity is designated 'posttransfer' editing and involves deacylation of mischarged Val-tRNA(Ile). Its function is as follows. Confers high-level resistance to the antibiotic mupirocin (pseudomonic acid A), an Ile-analog produced by P.fluorescens NCIMB 10586 itself that competitively inhibits activation by Ile-tRNA synthetase, thus inhibiting protein biosynthesis. The protein is Isoleucine--tRNA ligase 2 (ileS2) of Pseudomonas fluorescens.